The following is a 122-amino-acid chain: Large ribosomal subunit protein bL12 (122 aa).

The protein belongs to the bacterial ribosomal protein bL12 family. In terms of assembly, homodimer. Part of the ribosomal stalk of the 50S ribosomal subunit. Forms a multimeric L10(L12)X complex, where L10 forms an elongated spine to which 2 to 4 L12 dimers bind in a sequential fashion. Binds GTP-bound translation factors.

Functionally, forms part of the ribosomal stalk which helps the ribosome interact with GTP-bound translation factors. Is thus essential for accurate translation. The sequence is that of Large ribosomal subunit protein bL12 from Deinococcus radiodurans (strain ATCC 13939 / DSM 20539 / JCM 16871 / CCUG 27074 / LMG 4051 / NBRC 15346 / NCIMB 9279 / VKM B-1422 / R1).